The sequence spans 263 residues: Lens fiber major intrinsic protein (263 aa).

At 1-12 the chain is on the cytoplasmic side; that stretch reads MWELRSASFWRA. A helical membrane pass occupies residues 13–30; sequence IFAEFFATLFYVFFGLGA. The Extracellular segment spans residues 31–40; the sequence is SLRWAPGPLH. The helical transmembrane segment at 41–59 threads the bilayer; the sequence is VLQVALAFGLALATLVQAV. Residues 60 to 63 lie on the Cytoplasmic side of the membrane; it reads GHIS. The segment at residues 64-76 is an intramembrane region (discontinuously helical); the sequence is GAHVNPAVTFAFL. The short motif at 68–70 is the NPA 1 element; it reads NPA. The Cytoplasmic portion of the chain corresponds to 77–85; it reads VGSQMSLLR. A helical membrane pass occupies residues 86-106; it reads AICYVVAQLLGAVAGAAVLYS. The Extracellular segment spans residues 107–126; that stretch reads VTPPAVRGNLALNTLHPGVS. A helical transmembrane segment spans residues 127 to 147; that stretch reads VGQATIVEIFLTLQFVLCIFA. Residues 148 to 157 are Cytoplasmic-facing; the sequence is TYDERRNGRL. Residues 158-175 traverse the membrane as a helical segment; the sequence is GSVALAVGFSLTLGHLFG. The Extracellular portion of the chain corresponds to 176 to 177; it reads MY. The segment at residues 178-193 is an intramembrane region (discontinuously helical); that stretch reads YTGAGMNPARSFAPAI. The short motif at 184 to 186 is the NPA 2 element; it reads NPA. Topologically, residues 194 to 200 are extracellular; that stretch reads LTRNFTN. The chain crosses the membrane as a helical span at residues 201–218; the sequence is HWVYWVGPVIGAGLGSLL. Residues 219-263 are Cytoplasmic-facing; the sequence is YDFLLFPRLKSVSERLSILKGTRPSESNGQPEVTGEPVELKTQAL. Positions 227–237 are interaction with CALM; it reads LKSVSERLSIL. Phosphoserine is present on residues Ser-235, Ser-243, and Ser-245. The interval 240–263 is disordered; it reads TRPSESNGQPEVTGEPVELKTQAL.

It belongs to the MIP/aquaporin (TC 1.A.8) family. Homotetramer; each monomer provides an independent water pore. Two homotetramers on opposing membranes can dimerize, forming a cell-cell junction. Interacts with CALM; the calcium-calmodulin/CALM complex interacts with the cytoplasmic domains of two aquaporins, leading to channel closure. Interacts with BFSP1 (via C-terminus); prevents calcium-dependent inhibition of the water channel activity. In terms of processing, subject to partial proteolytic cleavage in the eye lens core. Partial proteolysis promotes interactions between tetramers from adjoining membranes. Fatty acylated at Met-1 and Lys-238. The acyl modifications, in decreasing order of ion abundance, are: oleoyl (C18:1) &gt; palmitoyl (C16:0) &gt; stearoyl (C18:0) &gt; eicosenoyl (C20:1) &gt; dihomo-gamma-linolenoyl (C20:3) &gt; palmitoleoyl (C16:1) &gt; eicosadienoyl (C20:2). As to expression, detected in eye lens (at protein level).

The protein resides in the cell membrane. Its subcellular location is the cell junction. The catalysed reaction is H2O(in) = H2O(out). With respect to regulation, the water channel activity is inhibited by calcium through calmodulin/CALM. Aquaporins form homotetrameric transmembrane channels, with each monomer independently mediating water transport across the plasma membrane along its osmotic gradient. Specifically expressed in lens fiber cells, this aquaporin is crucial for maintaining lens water homeostasis and transparency. Beyond water permeability, it also acts as a cell-to-cell adhesion molecule, forming thin junctions between lens fiber cells that are essential for maintaining the ordered structure and transparency of the lens. This Ovis aries (Sheep) protein is Lens fiber major intrinsic protein.